The sequence spans 1155 residues: Eukaryotic translation initiation factor 3 subunit A (1155 aa).

The 184-residue stretch at 319–502 (LQRMAAHVLL…NSIYFGTDLT (184 aa)) folds into the PCI domain. Disordered regions lie at residues 589–613 (QNNAREEEEARRQEEESRKAKLAEQ) and 836–1155 (AAEA…VKRR). Basic and acidic residues-rich tracts occupy residues 836-900 (AAEA…RGGD), 925-987 (DRNE…EPDS), 1004-1057 (SRDD…DAAP), and 1066-1101 (DAPRQSDRDNRRPAGDRRDREVRGGDLRGPESRAPK). The span at 1104 to 1118 (GPSGGTGTAASGGGN) shows a compositional bias: gly residues. Residues 1125–1145 (PRDEPAPKRDQPQDKENKAVD) show a composition bias toward basic and acidic residues.

It belongs to the eIF-3 subunit A family. As to quaternary structure, component of the eukaryotic translation initiation factor 3 (eIF-3) complex. The eIF-3 complex interacts with pix.

The protein resides in the cytoplasm. Its function is as follows. RNA-binding component of the eukaryotic translation initiation factor 3 (eIF-3) complex, which is involved in protein synthesis of a specialized repertoire of mRNAs and, together with other initiation factors, stimulates binding of mRNA and methionyl-tRNAi to the 40S ribosome. The eIF-3 complex specifically targets and initiates translation of a subset of mRNAs involved in cell proliferation. The protein is Eukaryotic translation initiation factor 3 subunit A of Drosophila pseudoobscura pseudoobscura (Fruit fly).